A 544-amino-acid chain; its full sequence is NEDD4-binding protein 3 (544 aa).

4 disordered regions span residues 61–84 (LPKK…ADYA), 116–252 (SVFK…EFSC), 335–365 (KELR…PEEE), and 430–465 (QEQA…RDSA). S176 is subject to Phosphoserine. Residues 186 to 222 (PSLSDSSSGGSFGRSPGTGPSPFSSSLGHLNHLGGSL) are compositionally biased toward low complexity. Residues 294–530 (LAELKRLYVE…LEQELRALRE (237 aa)) are a coiled coil.

This sequence belongs to the N4BP3 family. In terms of assembly, binds NEDD4. Interacts with 14-3-3 proteins. Interacts with MAVS.

The protein localises to the cytoplasmic vesicle. Its subcellular location is the cell projection. It is found in the axon. The protein resides in the dendrite. In terms of biological role, plays a positive role in the antiviral innate immune signaling pathway. Mechanistically, interacts with MAVS and functions as a positive regulator to promote 'Lys-63'-linked polyubiquitination of MAVS and thus strengthens the interaction between MAVS and TRAF2. Also plays a role in axon and dendrite arborization during cranial nerve development. May also be important for neural crest migration and early development of other anterior structures including eye, brain and cranial cartilage. The protein is NEDD4-binding protein 3 (N4BP3) of Homo sapiens (Human).